A 450-amino-acid chain; its full sequence is Glutamyl-tRNA reductase (450 aa).

Substrate contacts are provided by residues Thr-50–Arg-53, Ser-109, Glu-114–Gln-116, and Gln-120. Cys-51 serves as the catalytic Nucleophile. Gly-189–Ala-194 provides a ligand contact to NADP(+). Residues Asn-422–Leu-450 are disordered.

Belongs to the glutamyl-tRNA reductase family. Homodimer.

It catalyses the reaction (S)-4-amino-5-oxopentanoate + tRNA(Glu) + NADP(+) = L-glutamyl-tRNA(Glu) + NADPH + H(+). It functions in the pathway porphyrin-containing compound metabolism; protoporphyrin-IX biosynthesis; 5-aminolevulinate from L-glutamyl-tRNA(Glu): step 1/2. Catalyzes the NADPH-dependent reduction of glutamyl-tRNA(Glu) to glutamate 1-semialdehyde (GSA). In Oleidesulfovibrio alaskensis (strain ATCC BAA-1058 / DSM 17464 / G20) (Desulfovibrio alaskensis), this protein is Glutamyl-tRNA reductase.